Consider the following 266-residue polypeptide: Phosphatidate cytidylyltransferase (266 aa).

A run of 8 helical transmembrane segments spans residues 16–36 (FVLI…LFWA), 52–72 (LFQV…WVAA), 78–98 (PIEC…YQKA), 101–121 (SEAI…FGVY), 125–145 (GAVA…GAFF), 164–184 (LEGA…VGMG), 186–206 (LSGG…VAVF), and 237–257 (LDSM…LEIW).

This sequence belongs to the CDS family.

It is found in the cell inner membrane. The catalysed reaction is a 1,2-diacyl-sn-glycero-3-phosphate + CTP + H(+) = a CDP-1,2-diacyl-sn-glycerol + diphosphate. The protein operates within phospholipid metabolism; CDP-diacylglycerol biosynthesis; CDP-diacylglycerol from sn-glycerol 3-phosphate: step 3/3. The protein is Phosphatidate cytidylyltransferase (cdsA) of Helicobacter pylori (strain ATCC 700392 / 26695) (Campylobacter pylori).